The sequence spans 252 residues: Hydroxyacylglutathione hydrolase (252 aa).

Zn(2+) is bound by residues His54, His56, Asp58, His59, His111, Asp128, and His166.

Belongs to the metallo-beta-lactamase superfamily. Glyoxalase II family. In terms of assembly, monomer. Requires Zn(2+) as cofactor.

It catalyses the reaction an S-(2-hydroxyacyl)glutathione + H2O = a 2-hydroxy carboxylate + glutathione + H(+). Its pathway is secondary metabolite metabolism; methylglyoxal degradation; (R)-lactate from methylglyoxal: step 2/2. Its function is as follows. Thiolesterase that catalyzes the hydrolysis of S-D-lactoyl-glutathione to form glutathione and D-lactic acid. The polypeptide is Hydroxyacylglutathione hydrolase (Aliivibrio fischeri (strain MJ11) (Vibrio fischeri)).